Here is a 151-residue protein sequence, read N- to C-terminus: Cytochrome c-type biogenesis protein CcmE (151 aa).

Topologically, residues 1–9 are cytoplasmic; that stretch reads MKGLKKKRR. The chain crosses the membrane as a helical; Signal-anchor for type II membrane protein span at residues 10 to 30; that stretch reads IQIITLAFVALAGSTALIGYA. Topologically, residues 31 to 151 are periplasmic; that stretch reads MRDGINFFRS…FQHTEDQPQG (121 aa). Heme-binding residues include histidine 123 and tyrosine 127.

This sequence belongs to the CcmE/CycJ family.

The protein resides in the cell inner membrane. Functionally, heme chaperone required for the biogenesis of c-type cytochromes. Transiently binds heme delivered by CcmC and transfers the heme to apo-cytochromes in a process facilitated by CcmF and CcmH. This is Cytochrome c-type biogenesis protein CcmE from Cereibacter sphaeroides (strain ATCC 17025 / ATH 2.4.3) (Rhodobacter sphaeroides).